Consider the following 273-residue polypeptide: NADPH-dependent 7-cyano-7-deazaguanine reductase (273 aa).

81-83 contributes to the substrate binding site; sequence VES. 83–84 serves as a coordination point for NADPH; that stretch reads SK. Cys-179 functions as the Thioimide intermediate in the catalytic mechanism. Residue Asp-186 is the Proton donor of the active site. 218-219 lines the substrate pocket; sequence AE. An NADPH-binding site is contributed by 247 to 248; the sequence is RG.

The protein belongs to the GTP cyclohydrolase I family. QueF type 2 subfamily. Homodimer.

Its subcellular location is the cytoplasm. The enzyme catalyses 7-aminomethyl-7-carbaguanine + 2 NADP(+) = 7-cyano-7-deazaguanine + 2 NADPH + 3 H(+). The protein operates within tRNA modification; tRNA-queuosine biosynthesis. In terms of biological role, catalyzes the NADPH-dependent reduction of 7-cyano-7-deazaguanine (preQ0) to 7-aminomethyl-7-deazaguanine (preQ1). The polypeptide is NADPH-dependent 7-cyano-7-deazaguanine reductase (Rickettsia massiliae (strain Mtu5)).